A 147-amino-acid polypeptide reads, in one-letter code: Prefoldin subunit alpha (147 aa).

The protein belongs to the prefoldin alpha subunit family. As to quaternary structure, heterohexamer of two alpha and four beta subunits.

It localises to the cytoplasm. Functionally, molecular chaperone capable of stabilizing a range of proteins. Seems to fulfill an ATP-independent, HSP70-like function in archaeal de novo protein folding. This is Prefoldin subunit alpha from Saccharolobus islandicus (strain L.S.2.15 / Lassen #1) (Sulfolobus islandicus).